A 491-amino-acid chain; its full sequence is Angiopoietin-related protein 1 (491 aa).

The signal sequence occupies residues 1-23 (MKAFIWTLSVLFFLLMGIGHGRG). Residues 80–168 (ITRMDLENLK…LNVTTEMLKM (89 aa)) adopt a coiled-coil conformation. 2 N-linked (GlcNAc...) asparagine glycosylation sites follow: Asn160 and Asn188. In terms of domain architecture, Fibrinogen C-terminal spans 271–491 (FINEGPYKDC…AVQMLIKPID (221 aa)). 2 disulfide bridges follow: Cys280–Cys309 and Cys432–Cys445.

It localises to the secreted. The protein is Angiopoietin-related protein 1 (ANGPTL1) of Bos taurus (Bovine).